Reading from the N-terminus, the 300-residue chain is Mycothiol acetyltransferase (300 aa).

N-acetyltransferase domains lie at 4–140 (IDWR…RPLT) and 151–300 (VRLA…AVAD). Asp-36 contributes to the 1D-myo-inositol 2-(L-cysteinylamino)-2-deoxy-alpha-D-glucopyranoside binding site. Residue 79-81 (LVV) coordinates acetyl-CoA. Glu-178, Lys-219, and Glu-227 together coordinate 1D-myo-inositol 2-(L-cysteinylamino)-2-deoxy-alpha-D-glucopyranoside. 231–233 (VGV) contributes to the acetyl-CoA binding site. Tyr-269 contacts 1D-myo-inositol 2-(L-cysteinylamino)-2-deoxy-alpha-D-glucopyranoside. 274–279 (NGAAVK) lines the acetyl-CoA pocket.

The protein belongs to the acetyltransferase family. MshD subfamily. As to quaternary structure, monomer.

It carries out the reaction 1D-myo-inositol 2-(L-cysteinylamino)-2-deoxy-alpha-D-glucopyranoside + acetyl-CoA = mycothiol + CoA + H(+). Its function is as follows. Catalyzes the transfer of acetyl from acetyl-CoA to desacetylmycothiol (Cys-GlcN-Ins) to form mycothiol. This chain is Mycothiol acetyltransferase, found in Mycobacterium sp. (strain JLS).